The sequence spans 420 residues: Phosphoglycerate kinase, cytosolic (420 aa).

Residues Val23, Asp24, Phe25, Asn26, Arg39, Ser61, His62, Gly64, Arg65, Arg135, His171, and Arg172 each contribute to the (2R)-3-phosphoglycerate site. Positions 217 and 218 each coordinate ADP. Gly217 is a binding site for CDP. AMP contacts are provided by Ala218 and Lys219. Residue Ala218 coordinates ATP. A Mg(2+)-binding site is contributed by Ala218. (2R)-3-phosphoglycerate is bound at residue Lys219. A CDP-binding site is contributed by Asp222. Position 222 (Asp222) interacts with Mg(2+). Positions 223 and 241 each coordinate ADP. Lys223 contributes to the AMP binding site. Residue Lys223 coordinates ATP. Gly241 lines the CDP pocket. 2 residues coordinate AMP: Ala242 and Ala314. Positions 242 and 314 each coordinate ATP. The ADP site is built by Ala314 and Asn338. Positions 339 and 344 each coordinate CDP. 4 residues coordinate ADP: Phe344, Glu345, Glu377, and Ser378. AMP is bound at residue Glu345. Residues Glu345, Glu377, and Ser378 each coordinate ATP. Glu377 contacts Mg(2+).

Belongs to the phosphoglycerate kinase family. As to quaternary structure, monomer. The cofactor is Mg(2+).

It localises to the cytoplasm. It carries out the reaction (2R)-3-phosphoglycerate + ATP = (2R)-3-phospho-glyceroyl phosphate + ADP. It participates in carbohydrate degradation; glycolysis; pyruvate from D-glyceraldehyde 3-phosphate: step 2/5. The protein is Phosphoglycerate kinase, cytosolic of Trypanosoma brucei brucei.